Reading from the N-terminus, the 199-residue chain is Molybdenum cofactor guanylyltransferase (199 aa).

Residues 12–14 (LAG), Lys25, Asn53, Asp71, and Asp101 each bind GTP. Asp101 is a binding site for Mg(2+).

This sequence belongs to the MobA family. Monomer. Requires Mg(2+) as cofactor.

It is found in the cytoplasm. The enzyme catalyses Mo-molybdopterin + GTP + H(+) = Mo-molybdopterin guanine dinucleotide + diphosphate. Functionally, transfers a GMP moiety from GTP to Mo-molybdopterin (Mo-MPT) cofactor (Moco or molybdenum cofactor) to form Mo-molybdopterin guanine dinucleotide (Mo-MGD) cofactor. This is Molybdenum cofactor guanylyltransferase from Polynucleobacter asymbioticus (strain DSM 18221 / CIP 109841 / QLW-P1DMWA-1) (Polynucleobacter necessarius subsp. asymbioticus).